The following is a 634-amino-acid chain: Probable sulfate transporter 3.5 (634 aa).

Residues M1 to P12 are compositionally biased toward polar residues. The interval M1–F25 is disordered. Over M1–D81 the chain is Cytoplasmic. Residues V82 to L102 traverse the membrane as a helical segment. The Extracellular portion of the chain corresponds to A103–S104. The chain crosses the membrane as a helical span at residues I105–G125. The Cytoplasmic portion of the chain corresponds to S126 to L130. A helical membrane pass occupies residues A131–I151. Topologically, residues K152 to Y158 are extracellular. The helical transmembrane segment at L159–L179 threads the bilayer. Topologically, residues R180–G195 are cytoplasmic. A helical transmembrane segment spans residues F196–V216. At H217–K239 the chain is on the extracellular side. The helical transmembrane segment at W240 to K260 threads the bilayer. The Cytoplasmic segment spans residues Q261–K265. A helical transmembrane segment spans residues L266 to Y286. Topologically, residues L287 to G321 are extracellular. Residues M322–G342 traverse the membrane as a helical segment. Residues R343–E358 lie on the Cytoplasmic side of the membrane. Residues M359 to G379 form a helical membrane-spanning segment. The Extracellular segment spans residues P380–P395. Residues M396–F416 form a helical membrane-spanning segment. At S417 to P420 the chain is on the cytoplasmic side. The chain crosses the membrane as a helical span at residues L421–M441. Residues Y442–A458 lie on the Extracellular side of the membrane. The helical transmembrane segment at F459 to I479 threads the bilayer. Over V480 to V634 the chain is Cytoplasmic. The region spanning Q508–C623 is the STAS domain.

This sequence belongs to the SLC26A/SulP transporter (TC 2.A.53) family.

The protein resides in the membrane. Functionally, h(+)/sulfate cotransporter that may play a role in the regulation of sulfate assimilation. This is Probable sulfate transporter 3.5 (SULTR3;5) from Arabidopsis thaliana (Mouse-ear cress).